Reading from the N-terminus, the 353-residue chain is tRNA N6-adenosine threonylcarbamoyltransferase (353 aa).

Fe cation is bound by residues H109 and H113. Substrate-binding positions include T136–G140, D169, G182, D186, and N284. D312 is a binding site for Fe cation.

This sequence belongs to the KAE1 / TsaD family. Fe(2+) serves as cofactor.

The protein resides in the cytoplasm. It catalyses the reaction L-threonylcarbamoyladenylate + adenosine(37) in tRNA = N(6)-L-threonylcarbamoyladenosine(37) in tRNA + AMP + H(+). In terms of biological role, required for the formation of a threonylcarbamoyl group on adenosine at position 37 (t(6)A37) in tRNAs that read codons beginning with adenine. Is involved in the transfer of the threonylcarbamoyl moiety of threonylcarbamoyl-AMP (TC-AMP) to the N6 group of A37, together with TsaE and TsaB. TsaD likely plays a direct catalytic role in this reaction. This Chlorobaculum tepidum (strain ATCC 49652 / DSM 12025 / NBRC 103806 / TLS) (Chlorobium tepidum) protein is tRNA N6-adenosine threonylcarbamoyltransferase.